The sequence spans 449 residues: Glycosyl hydrolase-like protein 1 (449 aa).

A beta-D-glucoside is bound by residues Gln-22, His-119, 164-165 (NE), Tyr-292, Glu-350, Trp-393, and Tyr-406. The Proton donor role is filled by Glu-165. Residue Glu-350 is the Nucleophile of the active site.

Belongs to the glycosyl hydrolase 1 family. Mainly expressed in flowers, flower buds and young leaves, and, to a lesser extent, in old leaves, stems and roots.

The protein localises to the cytoplasm. Its pathway is secondary metabolite biosynthesis; terpenoid biosynthesis. Functionally, component of the oleanane-type triterpene saponins (e.g. saponarioside A and saponarioside B) biosynthetic pathway, leading to the production of natural products with detergent properties used as traditional sources of soap. Beta-glycosidase that catalyzes the transfer of glucose moiety to QA-triFRXX to produce QA-triF(Q)RXX via the elongation of the C-28 sugar chain with a D-quinovose. This chain is Glycosyl hydrolase-like protein 1, found in Saponaria officinalis (Common soapwort).